Consider the following 431-residue polypeptide: tRNA(Ile)-lysidine synthase (431 aa).

20–25 is a binding site for ATP; that stretch reads SGGLDS.

The protein belongs to the tRNA(Ile)-lysidine synthase family.

It localises to the cytoplasm. The enzyme catalyses cytidine(34) in tRNA(Ile2) + L-lysine + ATP = lysidine(34) in tRNA(Ile2) + AMP + diphosphate + H(+). Its function is as follows. Ligates lysine onto the cytidine present at position 34 of the AUA codon-specific tRNA(Ile) that contains the anticodon CAU, in an ATP-dependent manner. Cytidine is converted to lysidine, thus changing the amino acid specificity of the tRNA from methionine to isoleucine. This is tRNA(Ile)-lysidine synthase from Escherichia coli O157:H7.